Reading from the N-terminus, the 536-residue chain is 1,4-beta-D-glucan cellobiohydrolase B (536 aa).

An N-terminal signal peptide occupies residues 1–21; sequence MSSFQIYRAALLLSILATANA. Positions 22-458 are catalytic; the sequence is QQVGTYTTET…SNIKFGPIGS (437 aa). E233 functions as the Nucleophile in the catalytic mechanism. Residue E238 is the Proton donor of the active site. N351 and N414 each carry an N-linked (GlcNAc...) asparagine glycan. Residues 459-500 form a ser/Thr-rich linker region; the sequence is TYSSGSSSGSGSSSSSSSTTTKATSTTLKTTSTTSSGSSSTS. Residues 464–499 form a disordered region; it reads SSSGSGSSSSSSSTTTKATSTTLKTTSTTSSGSSST. Residues 500–536 enclose the CBM1 domain; the sequence is SAAQAYGQCGGQGWTGPTTCVSGYTCTYENAYYSQCL. 2 disulfide bridges follow: C508–C525 and C519–C535.

Belongs to the glycosyl hydrolase 7 (cellulase C) family.

It is found in the secreted. It catalyses the reaction Hydrolysis of (1-&gt;4)-beta-D-glucosidic linkages in cellulose and cellotetraose, releasing cellobiose from the non-reducing ends of the chains.. The biological conversion of cellulose to glucose generally requires three types of hydrolytic enzymes: (1) Endoglucanases which cut internal beta-1,4-glucosidic bonds; (2) Exocellobiohydrolases that cut the disaccharide cellobiose from the non-reducing end of the cellulose polymer chain; (3) Beta-1,4-glucosidases which hydrolyze the cellobiose and other short cello-oligosaccharides to glucose. This is 1,4-beta-D-glucan cellobiohydrolase B (cbhB) from Aspergillus niger.